Here is a 461-residue protein sequence, read N- to C-terminus: uncharacterized protein (461 aa).

Disordered stretches follow at residues 254–273 (NNNN…NNNN) and 368–414 (QPSQ…NNNS). Positions 381-413 (NNNNNNNNNNNNNNNNNNNNNNNNNNNNNNNNN) are enriched in low complexity.

This is an uncharacterized protein from Dictyostelium discoideum (Social amoeba).